Reading from the N-terminus, the 1466-residue chain is DNA-directed RNA polymerase subunit beta'' (1466 aa).

Residues cysteine 220, cysteine 296, cysteine 303, and cysteine 306 each coordinate Zn(2+). The segment at 618-725 (TREEDLEDEY…EDEYDSSEED (108 aa)) is disordered. 3 stretches are compositionally biased toward acidic residues: residues 621 to 631 (EDLEDEYETLE), 639 to 651 (DEYE…DEYG), and 707 to 725 (LEED…SEED).

Belongs to the RNA polymerase beta' chain family. RpoC2 subfamily. In terms of assembly, in plastids the minimal PEP RNA polymerase catalytic core is composed of four subunits: alpha, beta, beta', and beta''. When a (nuclear-encoded) sigma factor is associated with the core the holoenzyme is formed, which can initiate transcription. It depends on Zn(2+) as a cofactor.

Its subcellular location is the plastid. It is found in the chloroplast. The enzyme catalyses RNA(n) + a ribonucleoside 5'-triphosphate = RNA(n+1) + diphosphate. DNA-dependent RNA polymerase catalyzes the transcription of DNA into RNA using the four ribonucleoside triphosphates as substrates. This is DNA-directed RNA polymerase subunit beta'' from Agrostis stolonifera (Creeping bentgrass).